Here is a 293-residue protein sequence, read N- to C-terminus: Ribosomal protein L11 methyltransferase (293 aa).

S-adenosyl-L-methionine is bound by residues T145, G166, D188, and N230.

The protein belongs to the methyltransferase superfamily. PrmA family.

Its subcellular location is the cytoplasm. The enzyme catalyses L-lysyl-[protein] + 3 S-adenosyl-L-methionine = N(6),N(6),N(6)-trimethyl-L-lysyl-[protein] + 3 S-adenosyl-L-homocysteine + 3 H(+). Functionally, methylates ribosomal protein L11. This chain is Ribosomal protein L11 methyltransferase, found in Escherichia coli O7:K1 (strain IAI39 / ExPEC).